The chain runs to 181 residues: Cyclic AMP-dependent transcription factor ATF-3 (181 aa).

Residues 76–97 are disordered; it reads VTKAEVAPEEDERKKRRRERNK. A Glycyl lysine isopeptide (Lys-Gly) (interchain with G-Cter in SUMO2) cross-link involves residue Lys-78. The bZIP domain maps to 86 to 149; it reads DERKKRRRER…QHLIYMLNLH (64 aa). A basic motif region spans residues 88 to 110; sequence RKKRRRERNKIAAAKCRNKKKEK. The tract at residues 114 to 142 is leucine-zipper; sequence LQKESEKLESVNAELKAQIEELKNEKQHL. Position 162 is a phosphothreonine (Thr-162). Residue Lys-175 forms a Glycyl lysine isopeptide (Lys-Gly) (interchain with G-Cter in SUMO2) linkage.

It belongs to the bZIP family. ATF subfamily. In terms of assembly, binds DNA as a homodimer or a heterodimer. Interacts with KAT5; promoting KAT5 autoacetylation and KAT5 deubiquitination by USP7.

The protein resides in the nucleus. This protein binds the cAMP response element (CRE) (consensus: 5'-GTGACGT[AC][AG]-3'), a sequence present in many viral and cellular promoters. Represses transcription from promoters with ATF sites. It may repress transcription by stabilizing the binding of inhibitory cofactors at the promoter. The polypeptide is Cyclic AMP-dependent transcription factor ATF-3 (ATF3) (Bos taurus (Bovine)).